A 69-amino-acid chain; its full sequence is Cytochrome c oxidase subunit 8A, mitochondrial (69 aa).

The transit peptide at Met1–Gln25 directs the protein to the mitochondrion. Residues Ser2–Leu19 carry the SIFI-degron motif. Topologically, residues Ile26–Gly36 are mitochondrial matrix. Residues Thr37–Ser60 traverse the membrane as a helical segment. At His61 to Glu69 the chain is on the mitochondrial intermembrane side.

It belongs to the cytochrome c oxidase VIII family. As to quaternary structure, component of the cytochrome c oxidase (complex IV, CIV), a multisubunit enzyme composed of 14 subunits. The complex is composed of a catalytic core of 3 subunits MT-CO1, MT-CO2 and MT-CO3, encoded in the mitochondrial DNA, and 11 supernumerary subunits COX4I, COX5A, COX5B, COX6A, COX6B, COX6C, COX7A, COX7B, COX7C, COX8 and NDUFA4, which are encoded in the nuclear genome. The complex exists as a monomer or a dimer and forms supercomplexes (SCs) in the inner mitochondrial membrane with NADH-ubiquinone oxidoreductase (complex I, CI) and ubiquinol-cytochrome c oxidoreductase (cytochrome b-c1 complex, complex III, CIII), resulting in different assemblies (supercomplex SCI(1)III(2)IV(1) and megacomplex MCI(2)III(2)IV(2)). In terms of processing, in response to mitochondrial stress, the precursor protein is ubiquitinated by the SIFI complex in the cytoplasm before mitochondrial import, leading to its degradation. Within the SIFI complex, UBR4 initiates ubiquitin chain that are further elongated or branched by KCMF1.

The protein localises to the mitochondrion inner membrane. Its pathway is energy metabolism; oxidative phosphorylation. Component of the cytochrome c oxidase, the last enzyme in the mitochondrial electron transport chain which drives oxidative phosphorylation. The respiratory chain contains 3 multisubunit complexes succinate dehydrogenase (complex II, CII), ubiquinol-cytochrome c oxidoreductase (cytochrome b-c1 complex, complex III, CIII) and cytochrome c oxidase (complex IV, CIV), that cooperate to transfer electrons derived from NADH and succinate to molecular oxygen, creating an electrochemical gradient over the inner membrane that drives transmembrane transport and the ATP synthase. Cytochrome c oxidase is the component of the respiratory chain that catalyzes the reduction of oxygen to water. Electrons originating from reduced cytochrome c in the intermembrane space (IMS) are transferred via the dinuclear copper A center (CU(A)) of subunit 2 and heme A of subunit 1 to the active site in subunit 1, a binuclear center (BNC) formed by heme A3 and copper B (CU(B)). The BNC reduces molecular oxygen to 2 water molecules using 4 electrons from cytochrome c in the IMS and 4 protons from the mitochondrial matrix. In Carlito syrichta (Philippine tarsier), this protein is Cytochrome c oxidase subunit 8A, mitochondrial (COX8A).